A 106-amino-acid chain; its full sequence is MGKNNDWLNFEHLVKDKQIEALKPPSMYKVILNNDDYTPMEFVIDVLQKFFSYDIERATQLMLNVHYQGKAICGVFTAEVAETKVAHVNQYARENEHPLLCTLEKA.

Belongs to the ClpS family. Binds to the N-terminal domain of the chaperone ClpA.

Functionally, involved in the modulation of the specificity of the ClpAP-mediated ATP-dependent protein degradation. The polypeptide is ATP-dependent Clp protease adapter protein ClpS (Yersinia enterocolitica serotype O:8 / biotype 1B (strain NCTC 13174 / 8081)).